Consider the following 346-residue polypeptide: Sensor histidine kinase GraS (346 aa).

The next 2 membrane-spanning stretches (helical) occupy residues 15-35 and 43-63; these read MNWI…SLID and LFYI…LTYF. Positions 126-332 constitute a Histidine kinase domain; sequence EFVHDIKTPV…TVRLIFPLQN (207 aa).

In terms of assembly, interacts with GraX.

It is found in the cell membrane. The enzyme catalyses ATP + protein L-histidine = ADP + protein N-phospho-L-histidine.. Member of the two-component regulatory system GraR/GraS involved in resistance against cationic antimicrobial peptides (CAMPs). Functions as a sensor protein kinase which phosphorylates GraR through the auxiliary protein GraX. In turn, GraR up-regulates many genes such as adhesins, exoproteins, transporters, toxins, and proteins involved in cell wall synthesis. Down-regulates the expression of many genes involved in RNA and amino acid synthesis or glycolysis. This is Sensor histidine kinase GraS (graS) from Staphylococcus aureus (strain Mu50 / ATCC 700699).